We begin with the raw amino-acid sequence, 226 residues long: MNDPILSVEQVSKSFCCATERIQILSDVSFSVPRAVKVAITGESGCGKSTLLNIIGGMEHADSGIVRVLSCDVLTLHEHALTEYRRQFLGLVFQFHHLLRDFTALENVMLPGLIAGKSYREVRARAYELLEKVRVVQRAHHFPAQMSGGERQRTAVARALINDPTLILADEPTGNLDPKNALIVQDLLFSLTEEYQKTLLIVTHDPRIASMTDYRYQLQQGSLIRI.

Residues 6–226 (LSVEQVSKSF…QLQQGSLIRI (221 aa)) enclose the ABC transporter domain. 42 to 49 (GESGCGKS) contacts ATP.

It belongs to the ABC transporter superfamily. Lipoprotein translocase (TC 3.A.1.125) family. In terms of assembly, the complex is composed of two ATP-binding proteins (LolD) and two transmembrane proteins (LolC and LolE).

The protein resides in the cell inner membrane. Part of the ABC transporter complex LolCDE involved in the translocation of mature outer membrane-directed lipoproteins, from the inner membrane to the periplasmic chaperone, LolA. Responsible for the formation of the LolA-lipoprotein complex in an ATP-dependent manner. This Treponema pallidum (strain Nichols) protein is Lipoprotein-releasing system ATP-binding protein LolD.